We begin with the raw amino-acid sequence, 868 residues long: Alanine--tRNA ligase (868 aa).

Zn(2+) contacts are provided by His-553, His-557, Cys-657, and His-661. Residues 831–851 (GGKGGGRADMAQAGGSRPQAL) are disordered.

This sequence belongs to the class-II aminoacyl-tRNA synthetase family. Requires Zn(2+) as cofactor.

The protein resides in the cytoplasm. It catalyses the reaction tRNA(Ala) + L-alanine + ATP = L-alanyl-tRNA(Ala) + AMP + diphosphate. In terms of biological role, catalyzes the attachment of alanine to tRNA(Ala) in a two-step reaction: alanine is first activated by ATP to form Ala-AMP and then transferred to the acceptor end of tRNA(Ala). Also edits incorrectly charged Ser-tRNA(Ala) and Gly-tRNA(Ala) via its editing domain. This is Alanine--tRNA ligase from Chromohalobacter salexigens (strain ATCC BAA-138 / DSM 3043 / CIP 106854 / NCIMB 13768 / 1H11).